Reading from the N-terminus, the 364-residue chain is GDSL esterase/lipase 7 (364 aa).

A signal peptide spans 1-19 (MKSLLICLVLLELVWLGNG). Ser37 functions as the Nucleophile in the catalytic mechanism. N-linked (GlcNAc...) asparagine glycans are attached at residues Asn236, Asn237, and Asn264. Catalysis depends on residues Asp329 and His332. An N-linked (GlcNAc...) asparagine glycan is attached at Asn351.

Belongs to the 'GDSL' lipolytic enzyme family.

Its subcellular location is the secreted. The chain is GDSL esterase/lipase 7 (GLIP7) from Arabidopsis thaliana (Mouse-ear cress).